The primary structure comprises 95 residues: MEIPLINGFYFYVLRCADNTLYGGYTINLINRVERHNKGQGAKYTKARRPVQLIYFESFDNQHDAMSAEYQFKQRTRSSKIKFLKKNGISLTNLK.

Positions 7–82 (NGFYFYVLRC…KQRTRSSKIK (76 aa)) constitute a GIY-YIG domain.

It belongs to the UPF0213 family.

This chain is UPF0213 protein PEPE_0875, found in Pediococcus pentosaceus (strain ATCC 25745 / CCUG 21536 / LMG 10740 / 183-1w).